Consider the following 223-residue polypeptide: MFPFKVSKWMGLACLRSLVLPSPSIRQKKLIHKLQEEKAFREEMKIFHEKIEDFREEIWEFRGKIRAFRGQILGFWEEERPFWEEEKIFWKEEKTFWEMEKSFREEEKTFWKKYRTFWKEDKAFWREDNALWERDRNLLQEDKALWEEEKALWVEERALLAEEKALWEDKKSLWEEENALWEEEKALWVEGGGFHLLGEQRHQNGPYNANEEPQSTSFPRGRA.

Residues 129-153 (NALWERDRNLLQEDKALWEEEKALW) are a coiled coil. Residues 199 to 223 (EQRHQNGPYNANEEPQSTSFPRGRA) are disordered. The span at 203–223 (QNGPYNANEEPQSTSFPRGRA) shows a compositional bias: polar residues.

The protein is Coiled-coil domain-containing protein 70 of Mus musculus (Mouse).